A 745-amino-acid chain; its full sequence is 5-methyltetrahydropteroyltriglutamate--homocysteine methyltransferase (745 aa).

5-methyltetrahydropteroyltri-L-glutamate-binding positions include R19 to K22 and K119. L-homocysteine is bound by residues I418 to S420 and E471. Residues I418 to S420 and E471 contribute to the L-methionine site. 5-methyltetrahydropteroyltri-L-glutamate is bound by residues R502–C503 and W548. D586 is a binding site for L-homocysteine. L-methionine is bound at residue D586. Residue E592 participates in 5-methyltetrahydropteroyltri-L-glutamate binding. Residues H628, C630, and E652 each coordinate Zn(2+). H681 functions as the Proton donor in the catalytic mechanism. C713 is a binding site for Zn(2+).

This sequence belongs to the vitamin-B12 independent methionine synthase family. Zn(2+) is required as a cofactor.

It carries out the reaction 5-methyltetrahydropteroyltri-L-glutamate + L-homocysteine = tetrahydropteroyltri-L-glutamate + L-methionine. It participates in amino-acid biosynthesis; L-methionine biosynthesis via de novo pathway; L-methionine from L-homocysteine (MetE route): step 1/1. In terms of biological role, catalyzes the transfer of a methyl group from 5-methyltetrahydrofolate to homocysteine resulting in methionine formation. The polypeptide is 5-methyltetrahydropteroyltriglutamate--homocysteine methyltransferase (Corynebacterium glutamicum (strain R)).